The sequence spans 138 residues: Ribosome-binding factor A (138 aa).

The interval 112–138 (EARTQGQEPAADVEPAPGAAPDDEAEE) is disordered. A compositionally biased stretch (low complexity) spans 119-131 (EPAADVEPAPGAA).

Belongs to the RbfA family. In terms of assembly, monomer. Binds 30S ribosomal subunits, but not 50S ribosomal subunits or 70S ribosomes.

It localises to the cytoplasm. Its function is as follows. One of several proteins that assist in the late maturation steps of the functional core of the 30S ribosomal subunit. Associates with free 30S ribosomal subunits (but not with 30S subunits that are part of 70S ribosomes or polysomes). Required for efficient processing of 16S rRNA. May interact with the 5'-terminal helix region of 16S rRNA. The polypeptide is Ribosome-binding factor A (Anaeromyxobacter dehalogenans (strain 2CP-C)).